Here is a 201-residue protein sequence, read N- to C-terminus: Phospholipase D (201 aa).

Residues 1-25 form the signal peptide; the sequence is MKRKNKKFTEIFIAFILGIAIGVLG. One can recognise a PLD phosphodiesterase domain in the interval 142 to 169; sequence VPGIAHNKVIIIDKKKVITGSFNFTAAA. Catalysis depends on residues His147, Lys149, and Asp154.

The protein belongs to the phospholipase D family. As to quaternary structure, homodimer.

The protein localises to the secreted. It catalyses the reaction a 1,2-diacyl-sn-glycero-3-phosphocholine + H2O = a 1,2-diacyl-sn-glycero-3-phosphate + choline + H(+). In terms of biological role, could be a virulence factor. This chain is Phospholipase D (pld), found in Rickettsia bellii (strain RML369-C).